A 285-amino-acid polypeptide reads, in one-letter code: UPF0354 protein SA1564 (285 aa).

It belongs to the UPF0354 family.

The sequence is that of UPF0354 protein SA1564 from Staphylococcus aureus (strain N315).